The sequence spans 450 residues: ATP-dependent protease ATPase subunit HslU (450 aa).

Residues valine 29, 71-76, aspartate 261, glutamate 328, and arginine 400 each bind ATP; that span reads GVGKTE.

The protein belongs to the ClpX chaperone family. HslU subfamily. A double ring-shaped homohexamer of HslV is capped on each side by a ring-shaped HslU homohexamer. The assembly of the HslU/HslV complex is dependent on binding of ATP.

The protein resides in the cytoplasm. Functionally, ATPase subunit of a proteasome-like degradation complex; this subunit has chaperone activity. The binding of ATP and its subsequent hydrolysis by HslU are essential for unfolding of protein substrates subsequently hydrolyzed by HslV. HslU recognizes the N-terminal part of its protein substrates and unfolds these before they are guided to HslV for hydrolysis. The polypeptide is ATP-dependent protease ATPase subunit HslU (Rickettsia rickettsii (strain Iowa)).